A 784-amino-acid polypeptide reads, in one-letter code: MPHTLWMVWVLGVIISLSKEESSNQASLSCDRNGICKGSSGSLNSIPSGLTEAVKSLDLSNNRITYISNSDLQRCVNLQALVLTSNGINTIEEDSFSSLGSLEHLDLSYNYLSNLSSSWFKPLSSLTFLNLLGNPYKTLGETSLFSHLTKLQILRVGNMDTFTKIQRKDFAGLTFLEELEIDASDLQSYEPKSLKSIQNVSHLILHMKQHILLLEIFVDVTSSVECLELRDTDLDTFRFSELSTGETNSLIKKFTFRNVKITDESLFQVMKLLNQISGLLELEFDDCTLNGVGNFRASDNDRVIDPGKVETLTIRRLHIPRFYLFYDLSTLYSLTERVKRITVENSKVFLVPCLLSQHLKSLEYLDLSENLIVEEYLKNSACEDAWPSLQTLILRQNHLASLEKTGETLLTLKNLTNVDISKNSFHSMPETCQWPEKMKYLNLSSTRIHSVTGCIPKTLEILDVSNNNLNLFSLNLPQLKELYISRNKLMTLPDASLLPMLLVLKISRNAITTFSKEQLDSFHTLKTLEAGGNNFICSCEFLSFTQEQQALAKVLIDWPANYLCDSPSHVRGQQVQDVRLSVSECHRTALVSGMCCALFLLILLTGVLCHRFHGLWYMKMMWAWLQAKRKPRKAPSRNICYDAFVSYSERDAYWVENLMVQELENFNPPFKLCLHKRDFIPGKWIIDNIIDSIEKSHKTVFVLSENFVKSEWCKYELDFSHFRLFDENNDAAILILLEPIEKKAIPQRFCKLRKIMNTKTYLEWPMDEAQREGFWVNLRAAIKS.

An N-terminal signal peptide occupies residues 1–20 (MPHTLWMVWVLGVIISLSKE). The Extracellular portion of the chain corresponds to 21–587 (ESSNQASLSC…VRLSVSECHR (567 aa)). A disulfide bridge connects residues Cys-30 and Cys-36. LRR repeat units lie at residues 54–77 (VKSL…RCVN), 78–101 (LQAL…SLGS), 102–125 (LEHL…PLSS), 126–150 (LTFL…HLTK), 151–175 (LQIL…GLTF), 176–199 (LEEL…SIQN), 200–223 (VSHL…VTSS), 224–250 (VECL…TNSL), 251–278 (IKKF…QISG), 279–308 (LLEL…DPGK), 309–337 (VETL…LTER), 338–361 (VKRI…HLKS), 362–388 (LEYL…AWPS), 389–414 (LQTL…TLKN), 415–437 (LTNV…WPEK), 438–457 (MKYL…CIPK), 458–478 (TLEI…NLPQ), 479–500 (LKEL…LLPM), and 501–524 (LLVL…SFHT). N-linked (GlcNAc...) asparagine glycosylation is present at Asn-114. The N-linked (GlcNAc...) asparagine glycan is linked to Asn-199. Cys-353 and Cys-382 are joined by a disulfide. A glycan (N-linked (GlcNAc...) asparagine) is linked at Asn-414. Cysteines 432 and 454 form a disulfide. The N-linked (GlcNAc...) asparagine glycan is linked to Asn-442. In terms of domain architecture, LRRCT spans 525–579 (LKTLEAGGNNFICSCEFLSFTQEQQALAKVLIDWPANYLCDSPSHVRGQQVQDVR). Residues 588-608 (TALVSGMCCALFLLILLTGVL) form a helical membrane-spanning segment. The Cytoplasmic portion of the chain corresponds to 609 to 784 (CHRFHGLWYM…WVNLRAAIKS (176 aa)). In terms of domain architecture, TIR spans 639–782 (ICYDAFVSYS…GFWVNLRAAI (144 aa)). Lys-754 is covalently cross-linked (Glycyl lysine isopeptide (Lys-Gly) (interchain with G-Cter in ubiquitin)). Residues 761 to 778 (YLEWPMDEAQREGFWVNL) carry the ATG16L1-binding motif motif.

It belongs to the Toll-like receptor family. Interacts with LY96, TLR1 and TLR6 (via extracellular domain). TLR2 seems to exist in heterodimers with either TLR1 or TLR6 before stimulation by the ligand. The heterodimers form bigger oligomers in response to their corresponding ligands as well as further heterotypic associations with other receptors such as CD14 and/or CD36. Binds MYD88 (via TIR domain). Interacts with TICAM1. Interacts with CNPY3. Interacts with ATG16L1. Interacts with PPP1R11. Interacts with TICAM2. Interacts with TIRAP. In terms of processing, ubiquitinated at Lys-754 by PPP1R11, leading to its degradation. Deubiquitinated by USP2. Post-translationally, glycosylation of Asn-442 is critical for secretion of the N-terminal ectodomain of TLR2.

Its subcellular location is the membrane. It is found in the cytoplasmic vesicle. The protein resides in the phagosome membrane. It localises to the membrane raft. Its function is as follows. Cooperates with LY96 to mediate the innate immune response to bacterial lipoproteins and other microbial cell wall components. Cooperates with TLR1 or TLR6 to mediate the innate immune response to bacterial lipoproteins or lipopeptides. Acts via MYD88 and TRAF6, leading to NF-kappa-B activation, cytokine secretion and the inflammatory response. May also promote apoptosis in response to lipoproteins. Forms activation clusters composed of several receptors depending on the ligand, these clusters trigger signaling from the cell surface and subsequently are targeted to the Golgi in a lipid-raft dependent pathway. Forms the cluster TLR2:TLR6:CD14:CD36 in response to diacylated lipopeptides and TLR2:TLR1:CD14 in response to triacylated lipopeptides. This Pan troglodytes (Chimpanzee) protein is Toll-like receptor 2 (TLR2).